Consider the following 133-residue polypeptide: Sporulation-specific protein 2 (133 aa).

It belongs to the VPS13 family. As to quaternary structure, interacts with spo13 and spo15.

The protein localises to the cytoplasm. The protein resides in the cytoskeleton. Its subcellular location is the microtubule organizing center. It localises to the spindle pole body. Its function is as follows. Involved in sporulation. Plays a significant role in modification of the spindle pole body prior to spore formation and is required for initiating forespore membrane formation. Assists in the localization of spo13 to the outer surface of the SPB. This chain is Sporulation-specific protein 2 (spo2), found in Schizosaccharomyces pombe (strain 972 / ATCC 24843) (Fission yeast).